The chain runs to 303 residues: MNYRKVICIVGPTGVGKSEIAFHLAKRYDGIIINADSRQLYKGVPIITAQPTFEERSLIPHKLYACLDLHEKISAGRWATLAAEQLDSVCHTKIPLLVGGTGLYLRALFDGIVTIPPISTELSLTMEKQAEEKGISFLYNMLKVHDPLYANSIHPNDRQRVLRALTVFYETGKTFTWWHQQVTEAYPATVLRIGIKIPLIELAPLLEKRIDKMFVQGAIKEVITTYKRYFNKDVQNWSGIGYMELLGAIKGEYTFNEAKERWLKNTRSYAKRQLTWFNADKRIIWFCPDQLEDIQKCVENWLS.

11–18 (GPTGVGKS) lines the ATP pocket. 13–18 (TGVGKS) provides a ligand contact to substrate. Interaction with substrate tRNA stretches follow at residues 36-39 (DSRQ) and 159-163 (QRVLR).

This sequence belongs to the IPP transferase family. In terms of assembly, monomer. Mg(2+) is required as a cofactor.

It catalyses the reaction adenosine(37) in tRNA + dimethylallyl diphosphate = N(6)-dimethylallyladenosine(37) in tRNA + diphosphate. Catalyzes the transfer of a dimethylallyl group onto the adenine at position 37 in tRNAs that read codons beginning with uridine, leading to the formation of N6-(dimethylallyl)adenosine (i(6)A). This Lawsonia intracellularis (strain PHE/MN1-00) protein is tRNA dimethylallyltransferase.